The primary structure comprises 141 residues: Acetyltransferase YpeA (141 aa).

The N-acetyltransferase domain maps to 1 to 141 (MEIRVFRQED…GKRLIEDEEY (141 aa)).

This sequence belongs to the acetyltransferase family. YpeA subfamily.

This chain is Acetyltransferase YpeA, found in Shigella boydii serotype 4 (strain Sb227).